The sequence spans 265 residues: Mlc titration factor A (265 aa).

Zn(2+) contacts are provided by His111, His148, His152, and Glu211.

Belongs to the MtfA family. In terms of assembly, interacts with Mlc. Requires Zn(2+) as cofactor.

The protein localises to the cytoplasm. Functionally, involved in the modulation of the activity of the glucose-phosphotransferase system (glucose-PTS). Interacts with the transcriptional repressor Mlc, preventing its interaction with DNA and leading to the modulation of expression of genes regulated by Mlc, including ptsG, which encodes the PTS system glucose-specific EIICB component. Shows zinc-dependent metallopeptidase activity. The chain is Mlc titration factor A from Escherichia coli O127:H6 (strain E2348/69 / EPEC).